A 276-amino-acid chain; its full sequence is 2-dehydro-3-deoxyphosphooctonate aldolase (276 aa).

The protein belongs to the KdsA family.

The protein localises to the cytoplasm. The enzyme catalyses D-arabinose 5-phosphate + phosphoenolpyruvate + H2O = 3-deoxy-alpha-D-manno-2-octulosonate-8-phosphate + phosphate. The protein operates within carbohydrate biosynthesis; 3-deoxy-D-manno-octulosonate biosynthesis; 3-deoxy-D-manno-octulosonate from D-ribulose 5-phosphate: step 2/3. It functions in the pathway bacterial outer membrane biogenesis; lipopolysaccharide biosynthesis. This Xanthomonas axonopodis pv. citri (strain 306) protein is 2-dehydro-3-deoxyphosphooctonate aldolase.